A 73-amino-acid chain; its full sequence is Putative membrane protein insertion efficiency factor (73 aa).

Belongs to the UPF0161 family.

The protein localises to the cell inner membrane. Functionally, could be involved in insertion of integral membrane proteins into the membrane. This is Putative membrane protein insertion efficiency factor from Bacteroides fragilis (strain ATCC 25285 / DSM 2151 / CCUG 4856 / JCM 11019 / LMG 10263 / NCTC 9343 / Onslow / VPI 2553 / EN-2).